The chain runs to 1032 residues: Toll-like receptor 9 (1032 aa).

The N-terminal stretch at 1 to 25 (MVLRRRTLHPLSLLVQAAVLAETLA) is a signal peptide. The Extracellular portion of the chain corresponds to 26–818 (LGTLPAFLPC…LCLDEVLSWD (793 aa)). A disulfide bond links Cys-35 and Cys-45. Position 47 to 51 (47 to 51 (WLFLK)) interacts with DNA. LRR repeat units follow at residues 62–85 (CSNI…DFVH), 87–110 (SNLR…HFSC), 122–147 (MRTL…SLVN), 150–166 (LSHT…LAGL), 167–190 (YSLR…AVKV), 198–221 (LSNL…LPPS), 223–242 (EYLL…DLAN), 243–268 (LTSL…CIEC), 283–306 (LSHL…WFQG), 308–332 (VNLS…AFQN), 333–356 (LTRL…RLHL), 363–386 (LVSL…TLRW), 390–413 (LPKL…IFGT), 415–440 (RALR…TPEE), 471–495 (CKNF…MFVN), 497–520 (SRLQ…QFLP), 521–544 (LTNL…SFSE), 546–573 (PQLQ…SFVT), 575–599 (LSML…LNSN), 601–623 (VRFL…LYLH), 628–651 (LSGL…NLDN), 653–676 (PKSL…SLSF), 677–700 (LPNL…TLPN), 702–724 (TLLQ…FFAL), 725–748 (AVEL…WFGP), and 750–773 (VMNL…AFVD). An N-linked (GlcNAc...) asparagine glycan is attached at Asn-64. DNA is bound by residues 72-77 (SNRIHH) and 95-109 (KWNC…LHFS). A disulfide bridge links Cys-98 with Cys-110. Asn-129 carries N-linked (GlcNAc...) asparagine glycosylation. Tyr-132 lines the DNA pocket. Asn-147 carries an N-linked (GlcNAc...) asparagine glycan. A disulfide bridge connects residues Cys-178 and Cys-184. 179-181 (YYK) lines the DNA pocket. Asn-200 carries N-linked (GlcNAc...) asparagine glycosylation. Tyr-208 contributes to the DNA binding site. 2 N-linked (GlcNAc...) asparagine glycosylation sites follow: Asn-210 and Asn-242. Cystine bridges form between Cys-255/Cys-268 and Cys-258/Cys-265. Residues Cys-258 and Cys-265 are each lipidated (S-palmitoyl cysteine). 4 N-linked (GlcNAc...) asparagine glycosylation sites follow: Asn-300, Asn-309, Asn-332, and Asn-340. Positions 430 to 462 (PSTLSEATPEEADDAEQEELLSADPHPAPLSTP) are disordered. Residues 437-450 (TPEEADDAEQEELL) are compositionally biased toward acidic residues. Cys-471 and Cys-501 form a disulfide bridge. Asn-495 and Asn-514 each carry an N-linked (GlcNAc...) asparagine glycan. Asn-568 is a glycosylation site (N-linked (GlcNAc...) asparagine). 3 N-linked (GlcNAc...) asparagine glycosylation sites follow: Asn-670, Asn-695, and Asn-700. Asn-732 and Asn-752 each carry an N-linked (GlcNAc...) asparagine glycan. Cystine bridges form between Cys-765–Cys-791 and Cys-767–Cys-810. A helical transmembrane segment spans residues 819-839 (CFGLSLLAVAVGMVVPILHHL). Residues 840–1032 (CGWDVWYCFH…QNFCRGPTAE (193 aa)) lie on the Cytoplasmic side of the membrane. A TIR domain is found at 868 to 1013 (LPYDAFVVFD…GFWAQLSTAL (146 aa)).

Belongs to the Toll-like receptor family. In terms of assembly, monomer and homodimer. Exists as a monomer in the absence of unmethylated cytidine-phosphate-guanosine (CpG) ligand. Proteolytic processing of an insertion loop (Z-loop) is required for homodimerization upon binding to the unmethylated CpG ligand leading to its activation. Interacts with MYD88 via their respective TIR domains. Interacts with BTK. Interacts (via transmembrane domain) with UNC93B1. Interacts with CD300LH; the interaction may promote full activation of TLR9-triggered innate responses. Interacts with CNPY3 and HSP90B1; this interaction is required for proper folding in the endoplasmic reticulum. Interacts with SMPDL3B. Interacts with CD82; this interaction is essential for TLR9-dependent myddosome formation in response to CpG stimulation. Activated by proteolytic cleavage of the flexible loop between repeats LRR14 and LRR15 within the ectodomain. Cleavage requires UNC93B1. Proteolytically processed by first removing the majority of the ectodomain by either asparagine endopeptidase (AEP) or a cathepsin followed by a trimming event that is solely cathepsin mediated and required for optimal receptor signaling. Post-translationally, palmitoylated by ZDHHC3 in the Golgi regulates TLR9 trafficking from the Golgi to endosomes. Depalmitoylation by PPT1 controls the release of TLR9 from UNC93B1 in endosomes. As to expression, expressed in the basolateral region of gastric epithelial cells with high levels detected in antrum and body mucosa (at protein level). Detected in spleen and stomach at higher levels in C57BL/6 mice than BALB/C.

It is found in the endoplasmic reticulum membrane. The protein resides in the endosome. It localises to the lysosome. Its subcellular location is the cytoplasmic vesicle. The protein localises to the phagosome. In terms of biological role, key component of innate and adaptive immunity. TLRs (Toll-like receptors) control host immune response against pathogens through recognition of molecular patterns specific to microorganisms. TLR9 is a nucleotide-sensing TLR which is activated by unmethylated cytidine-phosphate-guanosine (CpG) dinucleotides. Acts via MYD88 and TRAF6, leading to NF-kappa-B activation, cytokine secretion and the inflammatory response. Plays a role in defense against systemic mouse cytomegalovirus infection. Controls lymphocyte response to Helicobacter infection. Upon CpG stimulation, induces B-cell proliferation, activation, survival and antibody production. The sequence is that of Toll-like receptor 9 (Tlr9) from Mus musculus (Mouse).